The primary structure comprises 380 residues: L-lactate dehydrogenase (380 aa).

Residues 1–380 (MIISSTTDFR…DRSILAKTDR (380 aa)) form the FMN hydroxy acid dehydrogenase domain. A substrate-binding site is contributed by Tyr24. Ser106 and Gln127 together coordinate FMN. Tyr129 contributes to the substrate binding site. Residue Thr155 coordinates FMN. Position 164 (Arg164) interacts with substrate. Lys251 provides a ligand contact to FMN. His275 functions as the Proton acceptor in the catalytic mechanism. Arg278 is a substrate binding site. 306 to 330 (DGGVRSGLDVVRMLALGAKGVLLGR) contributes to the FMN binding site.

It belongs to the FMN-dependent alpha-hydroxy acid dehydrogenase family. FMN is required as a cofactor.

It is found in the cell inner membrane. It carries out the reaction (S)-lactate + A = pyruvate + AH2. In terms of biological role, catalyzes the conversion of L-lactate to pyruvate. Is coupled to the respiratory chain. The polypeptide is L-lactate dehydrogenase (Caulobacter sp. (strain K31)).